Reading from the N-terminus, the 430-residue chain is UPF0597 protein Clos_2050 (430 aa).

Belongs to the UPF0597 family.

This is UPF0597 protein Clos_2050 from Alkaliphilus oremlandii (strain OhILAs) (Clostridium oremlandii (strain OhILAs)).